A 309-amino-acid polypeptide reads, in one-letter code: Taste receptor type 2 member 31 (309 aa).

The Extracellular portion of the chain corresponds to 1–2; it reads MI. The chain crosses the membrane as a helical span at residues 3 to 23; it reads TFLPIIFSILVVVTFVIGNFA. Residues 24–55 lie on the Cytoplasmic side of the membrane; sequence NGFIALVNSTEWVKRQKISFADQILTALAVSR. A helical transmembrane segment spans residues 56–76; sequence VGLLWVLLLNWYATVLNPAFY. The Extracellular segment spans residues 77 to 100; the sequence is SVEVRTTTYNVWAVTNHFSNWLAT. A helical transmembrane segment spans residues 101–121; that stretch reads SLSIFYLLKIANFSNLIFLHL. Topologically, residues 122-126 are cytoplasmic; that stretch reads KRRVK. Residues 127-147 form a helical membrane-spanning segment; that stretch reads NVILVMLLGPLLILACHLFMV. Over 148-181 the chain is Extracellular; the sequence is NMNEIVRTKEYEENMTWKYILRNAIYHPGMTVTT. Asparagine 161 carries N-linked (GlcNAc...) asparagine glycosylation. Residues 182–202 traverse the membrane as a helical segment; sequence LQNLVPFTLTLISFLLLICSL. Topologically, residues 203–229 are cytoplasmic; the sequence is CKHLKKMQLHGKGPQDPSTKVHIKALQ. The chain crosses the membrane as a helical span at residues 230–250; sequence IVISFLLLCVIYFVSVIISIW. Residues 251 to 259 lie on the Extracellular side of the membrane; sequence SFESLGNKP. A helical membrane pass occupies residues 260 to 280; it reads VFMFCQAIRFSYPSAHPFIVI. Topologically, residues 281 to 309 are cytoplasmic; it reads WGNKKLKQTFLSVLWNVRYWVKGQKPSSL.

It belongs to the G-protein coupled receptor T2R family.

The protein localises to the membrane. Its function is as follows. Receptor that may play a role in the perception of bitterness and is gustducin-linked. May play a role in sensing the chemical composition of the gastrointestinal content. The activity of this receptor may stimulate alpha gustducin, mediate PLC-beta-2 activation and lead to the gating of TRPM5. This chain is Taste receptor type 2 member 31 (TAS2R31), found in Papio hamadryas (Hamadryas baboon).